The sequence spans 782 residues: General transcription and DNA repair factor IIH helicase/translocase subunit XPB (782 aa).

Residues 1-11 are compositionally biased toward basic and acidic residues; the sequence is MGKRDRVDRDK. The interval 1–52 is disordered; the sequence is MGKRDRVDRDKKKSKKRQYEEEEEDEDDAPGNESQEAVPSAAGKQVDESSTK. A Nuclear localization signal motif is present at residues 6-18; it reads RVDRDKKKSKKRQ. Acidic residues predominate over residues 20–30; it reads EEEEEDEDDAP. A Phosphoserine modification is found at S34. One can recognise a Helicase ATP-binding domain in the interval 328-489; that stretch reads FGNGRARSGV…LNFLIGPKLY (162 aa). Position 341–348 (341–348) interacts with ATP; it reads PCGAGKSL. The DEVH box motif lies at 442-445; sequence EVHT. The 161-residue stretch at 543–703 folds into the Helicase C-terminal domain; that stretch reads ACQFLIKFHE…AGMEEEELAF (161 aa). S686 is modified (phosphoserine). S751 bears the Phosphoserine; by CK2 mark.

It belongs to the helicase family. RAD25/XPB subfamily. Component of the 7-subunit TFIIH core complex composed of XPB/ERCC3, XPD/ERCC2, GTF2H1, GTF2H2, GTF2H3, GTF2H4 and GTF2H5, which is active in NER. The core complex associates with the 3-subunit CDK-activating kinase (CAK) module composed of CCNH/cyclin H, CDK7 and MNAT1 to form the 10-subunit holoenzyme (holo-TFIIH) active in transcription. Interacts with PUF60. Interacts with ATF7IP. Interacts with KAT2A; leading to KAT2A recruitment to promoters and acetylation of histones. Part of TBP-based Pol II pre-initiation complex (PIC), in which Pol II core assembles with general transcription factors and other specific initiation factors including GTF2E1, GTF2E2, GTF2F1, GTF2F2, TCEA1, ERCC2, ERCC3, GTF2H2, GTF2H3, GTF2H4, GTF2H5, GTF2A1, GTF2A2, GTF2B and TBP; this large multi-subunit PIC complex mediates DNA unwinding and targets Pol II core to the transcription start site where the first phosphodiester bond forms. In terms of processing, phosphorylation on Ser-751 by CK2 controls the 5'-excision activity of ERCC1-XPF endonuclease; phosphorylated protein inhibits the excision activity and thus NER. Dephosphorylation reactivates the 5'-excision step. Phosphorylation has no effect on transcription or the 3'-5' helicase activity.

It is found in the nucleus. The enzyme catalyses Couples ATP hydrolysis with the unwinding of duplex DNA by translocating in the 3'-5' direction.. It carries out the reaction ATP + H2O = ADP + phosphate + H(+). With respect to regulation, phosphorylation on Ser-751 by CK2 controls the 5'-excision activity of ERCC1-XPF endonuclease; phosphorylated protein inhibits the excision activity and thus NER. ATPase activity is stimulated by TFIIH subunit p52 (GTF2H4). DNA translocase activity by this subunit in TFIIH is stimulated by XPA, ERCC5/XPG and XFP plus ERCC1. ATP-dependent 3'-5' DNA helicase/translocase; binds dsDNA rather than ssDNA, unzipping it in a translocase rather than classical helicase activity. Component of the general transcription and DNA repair factor IIH (TFIIH) core complex. When complexed to CDK-activating kinase (CAK), involved in RNA transcription by RNA polymerase II. The ATPase activity of XPB/ERCC3, but not its helicase activity, is required for DNA opening; it may wrap around the damaged DNA wedging it open, causing localized melting and twisting that allows XPD/ERCC2 helicase to anchor. The ATP-dependent helicase activity of XPB/ERCC3 may be required for promoter escape. Also involved in transcription-coupled nucleotide excision repair (NER) of damaged DNA. In NER, TFIIH acts by opening DNA around the lesion to allow the excision of the damaged oligonucleotide and its replacement by a new DNA fragment. The structure of the TFIIH transcription complex differs from the NER-TFIIH complex; large movements by XPD/ERCC2 and XPB/ERCC3 are stabilized by XPA. This chain is General transcription and DNA repair factor IIH helicase/translocase subunit XPB (Ercc3), found in Rattus norvegicus (Rat).